Here is an 894-residue protein sequence, read N- to C-terminus: Microsomal triglyceride transfer protein large subunit (894 aa).

The first 18 residues, 1 to 18, serve as a signal peptide directing secretion; the sequence is MILLAVLFLCFISSYSAS. Positions 28–659 constitute a Vitellogenin domain; that stretch reads LNNDRLYKLT…IFQYIGKAGL (632 aa). Cys174 and Cys194 are oxidised to a cystine.

As to quaternary structure, heterodimer; heterodimerizes with the protein disulfide isomerase (P4HB/PDI). Interacts with APOB. Interacts with PRAP1. In terms of tissue distribution, liver and small intestine. Also found in ovary, testis and kidney.

The protein resides in the endoplasmic reticulum. It is found in the golgi apparatus. It carries out the reaction a 1,2-diacyl-sn-glycero-3-phosphocholine(in) = a 1,2-diacyl-sn-glycero-3-phosphocholine(out). It catalyses the reaction a 1,2-diacyl-sn-glycero-3-phosphoethanolamine(in) = a 1,2-diacyl-sn-glycero-3-phosphoethanolamine(out). The enzyme catalyses a cholesterol ester(in) = a cholesterol ester(out). The catalysed reaction is a triacyl-sn-glycerol(in) = a triacyl-sn-glycerol(out). Functionally, catalyzes the transport of triglyceride, cholesteryl ester, and phospholipid between phospholipid surfaces. Required for the assembly and secretion of plasma lipoproteins that contain apolipoprotein B. May be involved in regulating cholesteryl ester biosynthesis in cells that produce lipoproteins. The protein is Microsomal triglyceride transfer protein large subunit (MTTP) of Homo sapiens (Human).